Reading from the N-terminus, the 134-residue chain is Ribosome-binding factor A (134 aa).

It belongs to the RbfA family. Monomer. Binds 30S ribosomal subunits, but not 50S ribosomal subunits or 70S ribosomes.

It localises to the cytoplasm. In terms of biological role, one of several proteins that assist in the late maturation steps of the functional core of the 30S ribosomal subunit. Associates with free 30S ribosomal subunits (but not with 30S subunits that are part of 70S ribosomes or polysomes). Required for efficient processing of 16S rRNA. May interact with the 5'-terminal helix region of 16S rRNA. The chain is Ribosome-binding factor A from Rhizobium johnstonii (strain DSM 114642 / LMG 32736 / 3841) (Rhizobium leguminosarum bv. viciae).